The chain runs to 256 residues: Thiazole synthase (256 aa).

The active-site Schiff-base intermediate with DXP is lysine 95. Residues glycine 156, 182–183 (AG), and 204–205 (NT) contribute to the 1-deoxy-D-xylulose 5-phosphate site.

The protein belongs to the ThiG family. In terms of assembly, homotetramer. Forms heterodimers with either ThiH or ThiS.

The protein localises to the cytoplasm. The enzyme catalyses [ThiS sulfur-carrier protein]-C-terminal-Gly-aminoethanethioate + 2-iminoacetate + 1-deoxy-D-xylulose 5-phosphate = [ThiS sulfur-carrier protein]-C-terminal Gly-Gly + 2-[(2R,5Z)-2-carboxy-4-methylthiazol-5(2H)-ylidene]ethyl phosphate + 2 H2O + H(+). It functions in the pathway cofactor biosynthesis; thiamine diphosphate biosynthesis. In terms of biological role, catalyzes the rearrangement of 1-deoxy-D-xylulose 5-phosphate (DXP) to produce the thiazole phosphate moiety of thiamine. Sulfur is provided by the thiocarboxylate moiety of the carrier protein ThiS. In vitro, sulfur can be provided by H(2)S. The chain is Thiazole synthase from Citrobacter koseri (strain ATCC BAA-895 / CDC 4225-83 / SGSC4696).